Here is a 4246-residue protein sequence, read N- to C-terminus: Intermembrane lipid transfer protein vps13F (4246 aa).

The 112-residue stretch at 2–113 folds into the Chorein N-terminal domain; the sequence is FESIVSNLLT…LLLQKKLKKL (112 aa). Disordered stretches follow at residues 141–271, 401–420, 591–759, 914–944, 964–1014, 1217–1251, 1356–1379, 1395–1436, 1622–1683, 2101–2131, 2211–2237, 2471–2513, 2704–2756, 3421–3449, 3611–3652, and 3794–3813; these read IKEK…EDED, PKKS…PPPK, KAED…SILG, VSSS…EKKL, KKSK…TNDE, QAQQ…IKSP, ISTH…DRVD, YNGV…KSKK, REKR…KSQS, LESL…QQQQ, HHSK…EKEK, QQQH…KSKQ, LSTS…QTTK, IDDD…TSPL, KTLN…NNQN, and NNNN…NIDE. Positions 168–201 are enriched in low complexity; the sequence is NASPVNSNNNNNNNSNLVSESNIPSSSSSSSSSL. The span at 207 to 217 shows a compositional bias: basic and acidic residues; the sequence is NSSKDANKSDD. Residues 218–271 show a composition bias toward acidic residues; it reads TDMDVDDDDEFQEATEGDYDNEEEQDDHDEEDDLSDDDDDDDDEEDDYEMEDED. Composition is skewed to low complexity over residues 401-413 and 597-658; these read PKKS…TTTP and QQQQ…SNST. Over residues 659–668 the composition is skewed to basic and acidic residues; that stretch reads DSKDIMKSSG. The segment covering 669–680 has biased composition (low complexity); sequence DKNVNNNNNMGD. The span at 681–702 shows a compositional bias: basic and acidic residues; it reads NENKDNIDKKEENKNDDQDNKN. Low complexity-rich tracts occupy residues 725-747 and 914-924; these read SGGW…QQQQ and VSSSPSPVSSP. 2 stretches are compositionally biased toward basic and acidic residues: residues 925-944 and 987-1001; these read SRDK…EKKL and DKYS…REES. A compositionally biased stretch (low complexity) spans 1217-1241; that stretch reads QAQQQAQQQQQSQHPSSNDDNSSSN. A compositionally biased stretch (acidic residues) spans 1400 to 1409; that stretch reads SDDDNNDDEN. 2 stretches are compositionally biased toward basic and acidic residues: residues 1410 to 1431 and 1622 to 1634; these read DKTT…DSLK and REKR…DKDN. The segment covering 1644 to 1670 has biased composition (low complexity); it reads QQSIPQKQQQQQQQQQQQQQQQQQQQQ. Low complexity-rich tracts occupy residues 2471-2506, 2705-2755, 3430-3449, 3613-3652, and 3794-3809; these read QQQH…NNNN, STST…TQTT, DSGS…TSPL, LNNN…NNQN, and NNNN…NDFN.

It belongs to the VPS13 family.

It localises to the membrane. Functionally, mediates the transfer of lipids between membranes at organelle contact sites. In Dictyostelium discoideum (Social amoeba), this protein is Intermembrane lipid transfer protein vps13F (vps13F).